Reading from the N-terminus, the 103-residue chain is Large ribosomal subunit protein bL21 (103 aa).

This sequence belongs to the bacterial ribosomal protein bL21 family. In terms of assembly, part of the 50S ribosomal subunit. Contacts protein L20.

In terms of biological role, this protein binds to 23S rRNA in the presence of protein L20. In Colwellia psychrerythraea (strain 34H / ATCC BAA-681) (Vibrio psychroerythus), this protein is Large ribosomal subunit protein bL21.